Consider the following 336-residue polypeptide: Large ribosomal subunit protein uL3 (336 aa).

Residues 1–34 (MVRHHQPRKGSVAFSPRKRAAKETPRIKSWPQND) are disordered.

Belongs to the universal ribosomal protein uL3 family. As to quaternary structure, part of the 50S ribosomal subunit. Forms a cluster with proteins L14 and L24e.

In terms of biological role, one of the primary rRNA binding proteins, it binds directly near the 3'-end of the 23S rRNA, where it nucleates assembly of the 50S subunit. This Methanobrevibacter smithii (strain ATCC 35061 / DSM 861 / OCM 144 / PS) protein is Large ribosomal subunit protein uL3.